We begin with the raw amino-acid sequence, 635 residues long: DNA mismatch repair protein MutL (635 aa).

Residues 359–399 are disordered; sequence GTNKYAQPEAAKSSAAEQAVARERSSARERAAPAYKEDHPY. Positions 364-377 are enriched in low complexity; the sequence is AQPEAAKSSAAEQA. A compositionally biased stretch (basic and acidic residues) spans 378-399; that stretch reads VARERSSARERAAPAYKEDHPY.

The protein belongs to the DNA mismatch repair MutL/HexB family.

Its function is as follows. This protein is involved in the repair of mismatches in DNA. It is required for dam-dependent methyl-directed DNA mismatch repair. May act as a 'molecular matchmaker', a protein that promotes the formation of a stable complex between two or more DNA-binding proteins in an ATP-dependent manner without itself being part of a final effector complex. The chain is DNA mismatch repair protein MutL from Yersinia pestis bv. Antiqua (strain Antiqua).